The sequence spans 1427 residues: Protein NPAT (1427 aa).

The segment at 1-318 (MLLPSDVARL…EEAIQDILEQ (318 aa)) is interaction with MIZF. A LisH domain is found at 3–35 (LPSDVARLVLGYLQQENLISTCQTFILESSDLK). Required for activation of histone gene transcription and interaction with MIZF regions lie at residues 5-25 (SDVA…STCQ) and 121-145 (KRQR…YLSG). The tract at residues 199 to 231 (KKAHASLMSPGRRKSESQRKSTTLSGPHSTIRN) is disordered. Ser207 carries the post-translational modification Phosphoserine. The segment covering 218 to 231 (KSTTLSGPHSTIRN) has biased composition (polar residues). Residues 262–338 (KLAENINKFL…FDLFDYGKTK (77 aa)) are mediates transcriptional activation. Phosphoserine is present on residues Ser554 and Ser599. The span at 628-644 (SLSSTKQPSNDSASVEL) shows a compositional bias: polar residues. Disordered regions lie at residues 628–669 (SLSS…VKEE) and 683–732 (EKVA…SAEI). Positions 629 to 653 (LSSTKQPSNDSASVELNHTENEAQA) are required for acceleration of G1 phase. The span at 654 to 665 (SKSENSQEPSSS) shows a compositional bias: low complexity. Positions 695–711 (VENSHSLPPESVCSSVG) are enriched in polar residues. 2 positions are modified to phosphoserine; by CDK2: Ser775 and Ser779. Required for acceleration of G1 phase regions lie at residues 828-853 (QNED…IQLM) and 1039-1054 (KSEE…SIVP). Disordered regions lie at residues 1095-1121 (FPNL…EKEK) and 1133-1152 (SAIS…KVSP). Positions 1097 to 1114 (NLDSPNVSSTLKPPSNNA) are enriched in polar residues. Ser1100 is subject to Phosphoserine; by CDK2. Glycyl lysine isopeptide (Lys-Gly) (interchain with G-Cter in SUMO2) cross-links involve residues Lys1116 and Lys1149. The span at 1140 to 1151 (TIRETQSEKKVS) shows a compositional bias: basic and acidic residues. 2 positions are modified to phosphoserine: Ser1151 and Ser1200. An N6-acetyllysine modification is found at Lys1228. The interval 1228 to 1252 (KDLKQEQTKSASSLITTEMLQDIQR) is required for acceleration of G1 phase. 2 disordered regions span residues 1253–1327 (HSSV…SENS) and 1348–1413 (SATP…FPAG). Ser1254 bears the Phosphoserine mark. Thr1270 bears the Phosphothreonine; by CDK2 mark. The span at 1276 to 1285 (GEKHKEEPID) shows a compositional bias: basic and acidic residues. A Glycyl lysine isopeptide (Lys-Gly) (interchain with G-Cter in SUMO2) cross-link involves residue Lys1280. The interval 1325 to 1349 (ENSVNMAAHTLMILSRAAISRTTSA) is required for acceleration of G1 phase. Polar residues predominate over residues 1348-1365 (SATPLKDNTQQFRASSRS). Thr1350 carries the post-translational modification Phosphothreonine; by CDK2. A compositionally biased stretch (basic and acidic residues) spans 1371-1382 (KIEELDERERNS). The span at 1383–1394 (RPSSKNLTNSSI) shows a compositional bias: polar residues. The span at 1396–1406 (MKKKKIKKKKL) shows a compositional bias: basic residues.

This sequence belongs to the NPAT family. In terms of assembly, interacts with the cylin/CDK complexes CCNE1/CDK2 and CCNA1/CDK2. Interacts with BZW1, CASP8AP2, CREBBP, MIZF and YY1. Interacts with the RUVBL1, RUVBL2 and TRRAP subunits of the NuA4 complex. May also interact with GAPDH, NME1, NME2 and STIP1. Post-translationally, phosphorylated at Ser-775, Ser-779, Ser-1100, Thr-1270 and Thr-1350 by CCNE1/CDK2 at G1-S transition and until prophase, which promotes association with histone gene clusters and stimulates activation of histone transcription. Also phosphorylated by CCNA1/CDK2 in vitro. In terms of tissue distribution, ubiquitously expressed.

The protein resides in the nucleus. Its subcellular location is the cajal body. Functionally, required for progression through the G1 and S phases of the cell cycle and for S phase entry. Activates transcription of the histone H2A, histone H2B, histone H3 and histone H4 genes in conjunction with MIZF. Also positively regulates the ATM, MIZF and PRKDC promoters. Transcriptional activation may be accomplished at least in part by the recruitment of the NuA4 histone acetyltransferase (HAT) complex to target gene promoters. The chain is Protein NPAT (NPAT) from Homo sapiens (Human).